Reading from the N-terminus, the 161-residue chain is Cyclic pyranopterin monophosphate synthase (161 aa).

Substrate-binding positions include 73–75 (LCH) and 110–111 (ME). Asp125 is a catalytic residue.

Belongs to the MoaC family. Homohexamer; trimer of dimers.

The enzyme catalyses (8S)-3',8-cyclo-7,8-dihydroguanosine 5'-triphosphate = cyclic pyranopterin phosphate + diphosphate. The protein operates within cofactor biosynthesis; molybdopterin biosynthesis. Functionally, catalyzes the conversion of (8S)-3',8-cyclo-7,8-dihydroguanosine 5'-triphosphate to cyclic pyranopterin monophosphate (cPMP). This is Cyclic pyranopterin monophosphate synthase from Pseudomonas syringae pv. tomato (strain ATCC BAA-871 / DC3000).